The following is a 234-amino-acid chain: 1-(5-phosphoribosyl)-5-[(5-phosphoribosylamino)methylideneamino] imidazole-4-carboxamide isomerase (234 aa).

Asp-9 serves as the catalytic Proton acceptor. Asp-131 acts as the Proton donor in catalysis.

The protein belongs to the HisA/HisF family.

The protein localises to the cytoplasm. The catalysed reaction is 1-(5-phospho-beta-D-ribosyl)-5-[(5-phospho-beta-D-ribosylamino)methylideneamino]imidazole-4-carboxamide = 5-[(5-phospho-1-deoxy-D-ribulos-1-ylimino)methylamino]-1-(5-phospho-beta-D-ribosyl)imidazole-4-carboxamide. The protein operates within amino-acid biosynthesis; L-histidine biosynthesis; L-histidine from 5-phospho-alpha-D-ribose 1-diphosphate: step 4/9. This is 1-(5-phosphoribosyl)-5-[(5-phosphoribosylamino)methylideneamino] imidazole-4-carboxamide isomerase from Staphylococcus saprophyticus subsp. saprophyticus (strain ATCC 15305 / DSM 20229 / NCIMB 8711 / NCTC 7292 / S-41).